The chain runs to 213 residues: LexA repressor (213 aa).

The segment at residues 31–51 (RAEISRELGFRSPNAAEEYLK) is a DNA-binding region (H-T-H motif). Residues Ser129 and Lys166 each act as for autocatalytic cleavage activity in the active site.

Belongs to the peptidase S24 family. As to quaternary structure, homodimer.

It carries out the reaction Hydrolysis of Ala-|-Gly bond in repressor LexA.. Functionally, represses a number of genes involved in the response to DNA damage (SOS response), including recA and lexA. In the presence of single-stranded DNA, RecA interacts with LexA causing an autocatalytic cleavage which disrupts the DNA-binding part of LexA, leading to derepression of the SOS regulon and eventually DNA repair. The polypeptide is LexA repressor (Mannheimia succiniciproducens (strain KCTC 0769BP / MBEL55E)).